The sequence spans 352 residues: uncharacterized protein (352 aa).

This is an uncharacterized protein from Frog virus 3 (isolate Goorha) (FV-3).